A 156-amino-acid polypeptide reads, in one-letter code: MAVGKFLLGSLLLLSLQLGQGWGPDARGVPVADGEFSSEQVAKAGGTWLGTHRPLARLRRALSGPCQLWSLTLSVAELGLGYASEEKVIFRYCAGSCPRGARTQHGLALARLQGQGRAHGGPCCRPTRYTDVAFLDDRHRWQRLPQLSAAACGCGG.

A signal peptide spans 1-21; the sequence is MAVGKFLLGSLLLLSLQLGQG. Disulfide bonds link C66–C124, C93–C152, and C97–C154.

This sequence belongs to the TGF-beta family. GDNF subfamily. In terms of assembly, homodimer; disulfide-linked. Interacts with GFRA4 coreceptor and RET: forms a 2:2:2 ternary complex composed of PSPN ligand, GFRA4 and RET receptor.

The protein resides in the secreted. Functionally, growth factor that exhibits neurotrophic activity on mesencephalic dopaminergic and motor neurons. Acts by binding to its coreceptor, GFRA4, leading to autophosphorylation and activation of the RET receptor. The protein is Persephin of Homo sapiens (Human).